The primary structure comprises 88 residues: Probable oxaloacetate decarboxylase gamma chain (88 aa).

A helical transmembrane segment spans residues 13–35 (LMFSGMGFVIIFLLILIWAIGIV).

Belongs to the OadG family. Heterotrimer of an alpha, a beta and a gamma subunit. The cofactor is Na(+).

It localises to the cell membrane. The enzyme catalyses oxaloacetate + 2 Na(+)(in) + H(+) = pyruvate + 2 Na(+)(out) + CO2. Its function is as follows. Catalyzes the decarboxylation of oxaloacetate coupled to Na(+) translocation. In Mannheimia succiniciproducens (strain KCTC 0769BP / MBEL55E), this protein is Probable oxaloacetate decarboxylase gamma chain.